The chain runs to 313 residues: Ribosomal protein L11 methyltransferase (313 aa).

The S-adenosyl-L-methionine site is built by Thr-164, Gly-185, Asp-207, and Asn-249.

It belongs to the methyltransferase superfamily. PrmA family.

It localises to the cytoplasm. The catalysed reaction is L-lysyl-[protein] + 3 S-adenosyl-L-methionine = N(6),N(6),N(6)-trimethyl-L-lysyl-[protein] + 3 S-adenosyl-L-homocysteine + 3 H(+). Methylates ribosomal protein L11. This chain is Ribosomal protein L11 methyltransferase, found in Clostridium botulinum (strain Alaska E43 / Type E3).